Reading from the N-terminus, the 667-residue chain is Cyclin-dependent kinase 17 (667 aa).

2 disordered regions span residues 1–70 (MTAY…SSLN) and 85–184 (DSEY…LRKM). Composition is skewed to acidic residues over residues 99-111 (EDFD…EFED) and 119-144 (DEDD…ITPE). Residues 151–164 (TGVTTQTTPPSNNT) show a composition bias toward polar residues. Residues 328-609 (YEKLDKLGEG…AAEAVKHPFL (282 aa)) enclose the Protein kinase domain. ATP-binding positions include 334–342 (LGEGTYATV) and Lys357. Asp449 acts as the Proton acceptor in catalysis. The Mg(2+) site is built by Asn454 and Asp467. Residues 642–667 (HHHSSRRHHRGTLVKDKYRMHSSHHT) form a disordered region. Over residues 644-653 (HSSRRHHRGT) the composition is skewed to basic residues.

This sequence belongs to the protein kinase superfamily. CMGC Ser/Thr protein kinase family. CDC2/CDKX subfamily. In terms of assembly, interacts with cyy-1; the interaction is required to activate pct-1. Mg(2+) serves as cofactor.

It is found in the cytoplasm. It localises to the cell projection. The protein resides in the dendrite. Its subcellular location is the axon. The enzyme catalyses L-seryl-[protein] + ATP = O-phospho-L-seryl-[protein] + ADP + H(+). It carries out the reaction L-threonyl-[protein] + ATP = O-phospho-L-threonyl-[protein] + ADP + H(+). Serine/threonine-protein kinase, which, in association with cyy-1, regulates the trafficking of synaptic vesicles in the DA9 motor neuron and probably also in the DD motor neurons and in RIA interneurons. In terms of biological role, sufficient for synaptic vesicle trafficking in the DA9 motor neuron. This chain is Cyclin-dependent kinase 17, found in Caenorhabditis elegans.